The primary structure comprises 217 residues: Adenylate kinase (217 aa).

Position 10–15 (10–15) interacts with ATP; the sequence is GAGKGT. Positions 30 to 59 are NMP; that stretch reads STGDLFRANISQQTELGKLAKSYMNAGNLV. AMP is bound by residues threonine 31, arginine 36, 57–59, 85–88, and glutamine 92; these read NLV and GFPR. Positions 126–164 are LID; it reads GRRVCRNEPKHVFHVTYTPPKKEGVCDVCGGELYQRDDD. Residues arginine 127 and 137–138 each bind ATP; that span reads VF. Positions 161 and 172 each coordinate AMP. Glycine 200 is an ATP binding site.

It belongs to the adenylate kinase family. Monomer.

Its subcellular location is the cytoplasm. It catalyses the reaction AMP + ATP = 2 ADP. It participates in purine metabolism; AMP biosynthesis via salvage pathway; AMP from ADP: step 1/1. Catalyzes the reversible transfer of the terminal phosphate group between ATP and AMP. Plays an important role in cellular energy homeostasis and in adenine nucleotide metabolism. This is Adenylate kinase from Streptomyces coelicolor (strain ATCC BAA-471 / A3(2) / M145).